Here is a 153-residue protein sequence, read N- to C-terminus: Membrane protein FAM174B (153 aa).

An N-terminal signal peptide occupies residues Met-1–Ala-27. Topologically, residues Arg-28 to Thr-84 are extracellular. The interval Glu-31–Ser-67 is disordered. An N-linked (GlcNAc...) asparagine glycan is attached at Asn-50. A helical transmembrane segment spans residues Leu-85–Leu-105. Residues Arg-106 to Arg-153 lie on the Cytoplasmic side of the membrane.

The protein belongs to the FAM174 family.

Its subcellular location is the cell membrane. It localises to the golgi apparatus. Essential for Golgi structural integrity. In Mus musculus (Mouse), this protein is Membrane protein FAM174B (Fam174b).